The following is a 177-amino-acid chain: Small ribosomal subunit protein uS5 (177 aa).

Residues 21–84 enclose the S5 DRBM domain; it reads LKEKMISVNR…DEARRGMIKI (64 aa).

It belongs to the universal ribosomal protein uS5 family. As to quaternary structure, part of the 30S ribosomal subunit. Contacts proteins S4 and S8.

Functionally, with S4 and S12 plays an important role in translational accuracy. Its function is as follows. Located at the back of the 30S subunit body where it stabilizes the conformation of the head with respect to the body. This chain is Small ribosomal subunit protein uS5, found in Nitrosomonas eutropha (strain DSM 101675 / C91 / Nm57).